A 525-amino-acid chain; its full sequence is GMP synthase [glutamine-hydrolyzing] (525 aa).

Residues 8 to 206 enclose the Glutamine amidotransferase type-1 domain; that stretch reads PLLILDFGSQ…VVDICKASTD (199 aa). Cysteine 85 serves as the catalytic Nucleophile. Residues histidine 180 and glutamate 182 contribute to the active site. The region spanning 207 to 400 is the GMPS ATP-PPase domain; that stretch reads WTPEHIIDEA…LGLPHDMVYR (194 aa). 234 to 240 is a binding site for ATP; sequence SGGVDSS.

In terms of assembly, homodimer.

The catalysed reaction is XMP + L-glutamine + ATP + H2O = GMP + L-glutamate + AMP + diphosphate + 2 H(+). The protein operates within purine metabolism; GMP biosynthesis; GMP from XMP (L-Gln route): step 1/1. Catalyzes the synthesis of GMP from XMP. The polypeptide is GMP synthase [glutamine-hydrolyzing] (Legionella pneumophila (strain Lens)).